A 250-amino-acid chain; its full sequence is Uracil-DNA glycosylase (250 aa).

Asp91 (proton acceptor) is an active-site residue.

Belongs to the uracil-DNA glycosylase (UDG) superfamily. UNG family.

It is found in the host nucleus. It catalyses the reaction Hydrolyzes single-stranded DNA or mismatched double-stranded DNA and polynucleotides, releasing free uracil.. Its function is as follows. Excises uracil residues from the DNA which can arise as a result of misincorporation of dUMP residues by DNA polymerase or due to deamination of cytosine. Excises uracil residues from the DNA which can arise as a result of misincorporation of dUMP residues by DNA polymerase or deamination of cytosines. Therefore may reduce deleterious uracil incorporation into the viral genome, particularly in terminally differentiated cells which lack DNA repair enzymes. This is Uracil-DNA glycosylase (UL114) from Homo sapiens (Human).